Consider the following 131-residue polypeptide: Histone H2A.2 (131 aa).

The segment at 1 to 22 (MSGGKGKAGSSEKASTSRSAKA) is disordered. Serine 2 is subject to N-acetylserine. N6-acetyllysine is present on residues lysine 5 and lysine 7. At glutamine 105 the chain carries N5-methylglutamine. Lysine 126 participates in a covalent cross-link: Glycyl lysine isopeptide (Lys-Gly) (interchain with G-Cter in SUMO). A Phosphoserine modification is found at serine 128. A [ST]-Q motif motif is present at residues 128 to 129 (SQ).

It belongs to the histone H2A family. As to quaternary structure, the nucleosome is a histone octamer containing two molecules each of H2A, H2B, H3 and H4 assembled in one H3-H4 heterotetramer and two H2A-H2B heterodimers. The octamer wraps approximately 147 bp of DNA. In terms of processing, phosphorylated to form H2AS128ph (gamma-H2A) in response to DNA double-strand breaks (DSBs) generated by exogenous genotoxic agents and by stalled replication forks. Phosphorylation is dependent on the DNA damage checkpoint kinases MEC1/ATR and TEL1/ATM, spreads on either side of a detected DSB site and may mark the surrounding chromatin for recruitment of proteins required for DNA damage signaling and repair. Gamma-H2A is removed from the DNA prior to the strand invasion-primer extension step of the repair process and subsequently dephosphorylated. Dephosphorylation is necessary for efficient recovery from the DNA damage checkpoint. Acetylated by ESA1 to form H2AK4ac and H2AK7ac.

The protein resides in the nucleus. The protein localises to the chromosome. In terms of biological role, core component of nucleosome which plays a central role in DNA double strand break (DSB) repair. Nucleosomes wrap and compact DNA into chromatin, limiting DNA accessibility to the cellular machineries which require DNA as a template. Histones thereby play a central role in transcription regulation, DNA repair, DNA replication and chromosomal stability. DNA accessibility is regulated via a complex set of post-translational modifications of histones, also called histone code, and nucleosome remodeling. The protein is Histone H2A.2 (HTA2) of Scheffersomyces stipitis (strain ATCC 58785 / CBS 6054 / NBRC 10063 / NRRL Y-11545) (Yeast).